Reading from the N-terminus, the 118-residue chain is UPF0295 protein BCE_0593 (118 aa).

The next 2 helical transmembrane spans lie at 12-32 and 43-63; these read IRTF…LGVF and FMMV…WIGM.

It belongs to the UPF0295 family.

The protein resides in the cell membrane. The polypeptide is UPF0295 protein BCE_0593 (Bacillus cereus (strain ATCC 10987 / NRS 248)).